A 71-amino-acid polypeptide reads, in one-letter code: MAILKASEIRELSAEEMKGKIAELKRELMKEGVNKSTGGAPSNPGKISEIKRTIARILTIMNEKEAQAKNA.

Belongs to the universal ribosomal protein uL29 family.

The sequence is that of Large ribosomal subunit protein uL29 from Methanococcus maripaludis (strain C7 / ATCC BAA-1331).